We begin with the raw amino-acid sequence, 309 residues long: Protease HtpX homolog (309 aa).

Transmembrane regions (helical) follow at residues Thr-7–Gly-27 and Gln-29–Ser-49. Position 131 (His-131) interacts with Zn(2+). Glu-132 is an active-site residue. His-135 contributes to the Zn(2+) binding site. 2 consecutive transmembrane segments (helical) span residues Ile-141–Ala-161 and Ile-182–Ile-202. Glu-207 provides a ligand contact to Zn(2+). Residues Arg-278 to Arg-309 form a disordered region.

Belongs to the peptidase M48B family. Requires Zn(2+) as cofactor.

The protein localises to the cell inner membrane. The protein is Protease HtpX homolog of Desulforapulum autotrophicum (strain ATCC 43914 / DSM 3382 / VKM B-1955 / HRM2) (Desulfobacterium autotrophicum).